The chain runs to 159 residues: Endoribonuclease YbeY (159 aa).

His-117, His-121, and His-127 together coordinate Zn(2+).

Belongs to the endoribonuclease YbeY family. Requires Zn(2+) as cofactor.

It localises to the cytoplasm. Its function is as follows. Single strand-specific metallo-endoribonuclease involved in late-stage 70S ribosome quality control and in maturation of the 3' terminus of the 16S rRNA. The sequence is that of Endoribonuclease YbeY from Azorhizobium caulinodans (strain ATCC 43989 / DSM 5975 / JCM 20966 / LMG 6465 / NBRC 14845 / NCIMB 13405 / ORS 571).